An 803-amino-acid polypeptide reads, in one-letter code: Translation initiation factor IF-2 (803 aa).

2 disordered regions span residues 95-125 and 138-178; these read PVVEQKRETEPAPTQEVPLTSDTTNLNEKAE and EVKE…EREE. The span at 111-121 shows a compositional bias: polar residues; it reads VPLTSDTTNLN. Over residues 138–155 the composition is skewed to basic and acidic residues; it reads EVKEEAKKTPSEKKETPK. Over residues 156 to 167 the composition is skewed to basic residues; sequence KGPRKETRRSRK. Residues 168 to 178 are compositionally biased toward basic and acidic residues; it reads PDKEDKWEREE. A tr-type G domain is found at 302-471; sequence PRAPVVTIMG…LLQAEVLELK (170 aa). Residues 311-318 are G1; the sequence is GHVDHGKT. Position 311–318 (311–318) interacts with GTP; sequence GHVDHGKT. Residues 336–340 form a G2 region; sequence GITQH. The segment at 357–360 is G3; the sequence is DTPG. Residues 357–361 and 411–414 each bind GTP; these read DTPGH and NKID. The G4 stretch occupies residues 411 to 414; that stretch reads NKID. Residues 447-449 form a G5 region; sequence SAK.

The protein belongs to the TRAFAC class translation factor GTPase superfamily. Classic translation factor GTPase family. IF-2 subfamily.

The protein resides in the cytoplasm. In terms of biological role, one of the essential components for the initiation of protein synthesis. Protects formylmethionyl-tRNA from spontaneous hydrolysis and promotes its binding to the 30S ribosomal subunits. Also involved in the hydrolysis of GTP during the formation of the 70S ribosomal complex. The sequence is that of Translation initiation factor IF-2 from Coxiella burnetii (strain Dugway 5J108-111).